Here is a 305-residue protein sequence, read N- to C-terminus: Putative F-box protein PP2-B8 (305 aa).

In terms of domain architecture, F-box spans 33–79 (VAELDDLPEECVSIIVSFTSPQDACVLASVSKTFASAVKSDIVWEKF).

This Arabidopsis thaliana (Mouse-ear cress) protein is Putative F-box protein PP2-B8 (PP2B8).